We begin with the raw amino-acid sequence, 208 residues long: Thymidylate kinase (208 aa).

10–17 (GPDGSGKT) lines the ATP pocket.

Belongs to the thymidylate kinase family.

It carries out the reaction dTMP + ATP = dTDP + ADP. Functionally, phosphorylation of dTMP to form dTDP in both de novo and salvage pathways of dTTP synthesis. The polypeptide is Thymidylate kinase (Listeria monocytogenes serotype 4a (strain HCC23)).